Here is a 391-residue protein sequence, read N- to C-terminus: Methionine import ATP-binding protein MetN 2 (391 aa).

One can recognise an ABC transporter domain in the interval 44 to 280 (VHVGKVFATP…PRHGATRALL (237 aa)). Position 77-84 (77-84 (GRSGAGKS)) interacts with ATP.

This sequence belongs to the ABC transporter superfamily. Methionine importer (TC 3.A.1.24) family. In terms of assembly, the complex is composed of two ATP-binding proteins (MetN), two transmembrane proteins (MetI) and a solute-binding protein (MetQ).

It is found in the cell inner membrane. It carries out the reaction L-methionine(out) + ATP + H2O = L-methionine(in) + ADP + phosphate + H(+). It catalyses the reaction D-methionine(out) + ATP + H2O = D-methionine(in) + ADP + phosphate + H(+). Functionally, part of the ABC transporter complex MetNIQ involved in methionine import. Responsible for energy coupling to the transport system. This Burkholderia ambifaria (strain ATCC BAA-244 / DSM 16087 / CCUG 44356 / LMG 19182 / AMMD) (Burkholderia cepacia (strain AMMD)) protein is Methionine import ATP-binding protein MetN 2.